The chain runs to 891 residues: MLPVEVPLSHLGPPILLLLQLLLPPTSAFFPNIWSLLAAPGSVTHQDLTEEAALNVTLVLFLEQPHPGRPRLHVEDYRGRTLLADDIFAAYFGPGFSSRRFRAALGEVSRANAAQDFLPAFKSNPDLHFDAERLVQGRTRLVGALRETLVAARALEYTLARQRLGAALHALQDFYSHSNWVELGERQPHPHLLWPRQELWSLAQVGDPTCSDCEGLSCPGNMLDSTLLTSGYFGMHPPKPPGKCSHGGHFDQSSSQPPRGGINKDSTSPSFSPHHKLHLQAAEVALLASIEAFSLLRSRLGDKAFSRLLDITPASSLSFVLDTTGSMGEEINAAKIQARRIVEQRQGSPMEPVFYILVPFHDPGFGPVFTTSDPDSFWQKLNEIHALGGGDEPEMCLSALELALLHTPPLSDIFVFTDASPKDALLTNRVESLTRERRCRVTFLVTEDPSRTGGRRRREALSPLRFEPYEAIARASGGEVIFTKDQYIQDVAAIVGESMAGLVTLPLDPPVFTPGEPCVFSVDSLLWQVTVRMHGDISSFWIKSPAGVSQGPEEGIGPLGHTRRFGQFWTVTMTDPPRTGTWEIQVAAAGTPRVRVQAQTSLDFLFHFGISVEDGPHPGLYPLTQPVAGLQTQLLVEVTGLTSRQKLVGGQPQFSHVVLRRVPEGTQLGRVSLEPVGPPVRGLLAASLPPTLLSVSSPFSLELVGQGGGGESLRRTAPQPCSVAPVLLELSGPPDFLTPGSKAPLSLHIVSFSGPQDLDLRTSVNPSFSLTSNLSRARLGLNESAWGRLWLEVPDSAAPDSVVMVTVTAAGQGASQVPPTHAFLRLLVLAQSSKDQLDGPAHSAAPVLPPVSPALLPSTLVTQGRAGGGMAGKAWWGTVGGVLFLLGCTSW.

The signal sequence occupies residues 1–28 (MLPVEVPLSHLGPPILLLLQLLLPPTSA). A glycan (N-linked (GlcNAc...) asparagine) is linked at asparagine 55. The tract at residues 238–273 (PKPPGKCSHGGHFDQSSSQPPRGGINKDSTSPSFSP) is disordered. Positions 314 to 499 (ASSLSFVLDT…DVAAIVGESM (186 aa)) constitute a VWFA domain.

In terms of tissue distribution, expressed at low level in many tissues.

It localises to the secreted. The chain is von Willebrand factor A domain-containing protein 7 (Vwa7) from Mus musculus (Mouse).